The sequence spans 442 residues: DNA topoisomerase medium subunit (442 aa).

Positions 29 to 438 (IPNMIDGFKP…DVVTEYTKDL (410 aa)) constitute a Topo IIA-type catalytic domain. Tyr-117 (O-(5'-phospho-DNA)-tyrosine intermediate) is an active-site residue.

This sequence belongs to the type II topoisomerase family. In terms of assembly, part of the DNA topoisomerase complex made of gp39, gp52 and gp60. Mg(2+) is required as a cofactor.

It carries out the reaction ATP-dependent breakage, passage and rejoining of double-stranded DNA.. In terms of biological role, medium subunit of the DNA topoisomerase that untwists superhelical DNA. Controls topological states of double-stranded DNA by transient breakage and subsequent rejoining of DNA strands. The sequence is that of DNA topoisomerase medium subunit (52) from Enterobacteria phage T4 (Bacteriophage T4).